The primary structure comprises 714 residues: Methylmalonyl-CoA mutase (714 aa).

The region spanning 584–714 is the B12-binding domain; sequence RPRILIAKMG…VLNLISQHHD (131 aa). Residue His-597 coordinates adenosylcob(III)alamin.

This sequence belongs to the methylmalonyl-CoA mutase family. As to quaternary structure, homodimer. Interacts with ArgK. Adenosylcob(III)alamin serves as cofactor.

It carries out the reaction (R)-methylmalonyl-CoA = succinyl-CoA. Functionally, catalyzes the interconversion of succinyl-CoA and methylmalonyl-CoA. Could be part of a pathway that converts succinate to propionate. This Escherichia coli (strain K12) protein is Methylmalonyl-CoA mutase (scpA).